The following is a 485-amino-acid chain: UDP-N-acetylmuramate--L-alanine ligase (485 aa).

Residue 120-126 coordinates ATP; that stretch reads GSHGKTT.

Belongs to the MurCDEF family.

The protein resides in the cytoplasm. The catalysed reaction is UDP-N-acetyl-alpha-D-muramate + L-alanine + ATP = UDP-N-acetyl-alpha-D-muramoyl-L-alanine + ADP + phosphate + H(+). Its pathway is cell wall biogenesis; peptidoglycan biosynthesis. Cell wall formation. This Rickettsia conorii (strain ATCC VR-613 / Malish 7) protein is UDP-N-acetylmuramate--L-alanine ligase.